The chain runs to 450 residues: Beta-glucosidase (450 aa).

Residue E166 is the Proton donor of the active site. E355 functions as the Nucleophile in the catalytic mechanism.

This sequence belongs to the glycosyl hydrolase 1 family.

It catalyses the reaction Hydrolysis of terminal, non-reducing beta-D-glucosyl residues with release of beta-D-glucose.. The polypeptide is Beta-glucosidase (bglA) (Niallia circulans (Bacillus circulans)).